The sequence spans 231 residues: Ribosomal RNA small subunit methyltransferase G (231 aa).

S-adenosyl-L-methionine contacts are provided by residues G92, L97, 143-144 (VE), and R162.

It belongs to the methyltransferase superfamily. RNA methyltransferase RsmG family.

The protein resides in the cytoplasm. The enzyme catalyses guanosine(527) in 16S rRNA + S-adenosyl-L-methionine = N(7)-methylguanosine(527) in 16S rRNA + S-adenosyl-L-homocysteine. Its function is as follows. Specifically methylates the N7 position of guanine in position 527 of 16S rRNA. The polypeptide is Ribosomal RNA small subunit methyltransferase G (Burkholderia thailandensis (strain ATCC 700388 / DSM 13276 / CCUG 48851 / CIP 106301 / E264)).